A 222-amino-acid polypeptide reads, in one-letter code: Protein-L-isoaspartate O-methyltransferase (222 aa).

The active site involves S70.

Belongs to the methyltransferase superfamily. L-isoaspartyl/D-aspartyl protein methyltransferase family.

It is found in the cytoplasm. The catalysed reaction is [protein]-L-isoaspartate + S-adenosyl-L-methionine = [protein]-L-isoaspartate alpha-methyl ester + S-adenosyl-L-homocysteine. Functionally, catalyzes the methyl esterification of L-isoaspartyl residues in peptides and proteins that result from spontaneous decomposition of normal L-aspartyl and L-asparaginyl residues. It plays a role in the repair and/or degradation of damaged proteins. The sequence is that of Protein-L-isoaspartate O-methyltransferase from Jannaschia sp. (strain CCS1).